A 149-amino-acid polypeptide reads, in one-letter code: Large ribosomal subunit protein bL9 (149 aa).

Belongs to the bacterial ribosomal protein bL9 family.

Its function is as follows. Binds to the 23S rRNA. The chain is Large ribosomal subunit protein bL9 from Legionella pneumophila subsp. pneumophila (strain Philadelphia 1 / ATCC 33152 / DSM 7513).